Here is a 364-residue protein sequence, read N- to C-terminus: UDP-N-acetylglucosamine--N-acetylmuramyl-(pentapeptide) pyrophosphoryl-undecaprenol N-acetylglucosamine transferase 1 (364 aa).

UDP-N-acetyl-alpha-D-glucosamine-binding positions include 10–12 (TGG), Asn124, Ser195, Ile250, and Gln295.

It belongs to the glycosyltransferase 28 family. MurG subfamily.

The protein resides in the cell membrane. The catalysed reaction is di-trans,octa-cis-undecaprenyl diphospho-N-acetyl-alpha-D-muramoyl-L-alanyl-D-glutamyl-meso-2,6-diaminopimeloyl-D-alanyl-D-alanine + UDP-N-acetyl-alpha-D-glucosamine = di-trans,octa-cis-undecaprenyl diphospho-[N-acetyl-alpha-D-glucosaminyl-(1-&gt;4)]-N-acetyl-alpha-D-muramoyl-L-alanyl-D-glutamyl-meso-2,6-diaminopimeloyl-D-alanyl-D-alanine + UDP + H(+). It participates in cell wall biogenesis; peptidoglycan biosynthesis. Cell wall formation. Catalyzes the transfer of a GlcNAc subunit on undecaprenyl-pyrophosphoryl-MurNAc-pentapeptide (lipid intermediate I) to form undecaprenyl-pyrophosphoryl-MurNAc-(pentapeptide)GlcNAc (lipid intermediate II). This Bacillus thuringiensis subsp. konkukian (strain 97-27) protein is UDP-N-acetylglucosamine--N-acetylmuramyl-(pentapeptide) pyrophosphoryl-undecaprenol N-acetylglucosamine transferase 1.